A 306-amino-acid chain; its full sequence is Putative NylC-analogous protein (306 aa).

This sequence belongs to the peptidase S58 family.

The chain is Putative NylC-analogous protein from Agromyces sp. (strain KY5R).